The following is a 387-amino-acid chain: Ferrochelatase (387 aa).

Fe cation contacts are provided by histidine 196 and glutamate 277.

The protein belongs to the ferrochelatase family.

The protein localises to the cytoplasm. It catalyses the reaction heme b + 2 H(+) = protoporphyrin IX + Fe(2+). The protein operates within porphyrin-containing compound metabolism; protoheme biosynthesis; protoheme from protoporphyrin-IX: step 1/1. Functionally, catalyzes the ferrous insertion into protoporphyrin IX. The sequence is that of Ferrochelatase from Gloeothece citriformis (strain PCC 7424) (Cyanothece sp. (strain PCC 7424)).